Consider the following 174-residue polypeptide: MPTWMLLFCLLCVTSSNLSSALEDNCKTFSTTLPNMLRELRAAFSSVKTYFQTRDKLETKLIDKSLLEELKSYLGCQALSEMIKFYLEEVMPRAEENELDVKEDVGSLGEKLKALRLRLKRCHRFLPCEDNSRVVKQVRNTYKELQEQGVYKAMGDFDIFIGYMEEYLTMHIGK.

The N-terminal stretch at 1 to 16 (MPTWMLLFCLLCVTSS) is a signal peptide. A glycan (N-linked (GlcNAc...) asparagine) is linked at N17. Intrachain disulfides connect C26-C122 and C76-C128.

Belongs to the IL-10 family. Homodimer. Interacts with IL10RA and IL10RB.

It localises to the secreted. Major immune regulatory cytokine that acts on many cells of the immune system where it has profound anti-inflammatory functions, limiting excessive tissue disruption caused by inflammation. Mechanistically, IL10 binds to its heterotetrameric receptor comprising IL10RA and IL10RB leading to JAK1 and STAT2-mediated phosphorylation of STAT3. In turn, STAT3 translocates to the nucleus where it drives expression of anti-inflammatory mediators. Targets antigen-presenting cells (APCs) such as macrophages and monocytes and inhibits their release of pro-inflammatory cytokines including granulocyte-macrophage colony-stimulating factor /GM-CSF, granulocyte colony-stimulating factor/G-CSF, IL-1 alpha, IL-1 beta, IL-6, IL-8 and TNF-alpha. Also interferes with antigen presentation by reducing the expression of MHC-class II and co-stimulatory molecules, thereby inhibiting their ability to induce T cell activation. In addition, controls the inflammatory response of macrophages by reprogramming essential metabolic pathways including mTOR signaling. The sequence is that of Interleukin-10 (IL10) from Trichosurus vulpecula (Brush-tailed possum).